The sequence spans 559 residues: Nicotinate phosphoribosyltransferase 1 (559 aa).

Residues Y33 and T221 each coordinate nicotinate. H224 carries the phosphohistidine modification. R331 contributes to the nicotinate binding site. Residue T393 coordinates 5-phospho-alpha-D-ribose 1-diphosphate.

The protein belongs to the NAPRTase family. Requires Mg(2+) as cofactor. Mn(2+) is required as a cofactor. Transiently phosphorylated on a His residue during the reaction cycle. Phosphorylation strongly increases the affinity for substrates and increases the rate of nicotinate D-ribonucleotide production. Dephosphorylation regenerates the low-affinity form of the enzyme, leading to product release.

It catalyses the reaction nicotinate + 5-phospho-alpha-D-ribose 1-diphosphate + ATP + H2O = nicotinate beta-D-ribonucleotide + ADP + phosphate + diphosphate. Its pathway is cofactor biosynthesis; NAD(+) biosynthesis; nicotinate D-ribonucleotide from nicotinate: step 1/1. Functionally, catalyzes the first step in the biosynthesis of NAD from nicotinic acid, the ATP-dependent synthesis of beta-nicotinate D-ribonucleotide from nicotinate and 5-phospho-D-ribose 1-phosphate. Helps prevent cellular oxidative stress via its role in NAD biosynthesis. The protein is Nicotinate phosphoribosyltransferase 1 of Arabidopsis thaliana (Mouse-ear cress).